A 175-amino-acid chain; its full sequence is Transcriptional repressor NrdR (175 aa).

A zinc finger lies at 3-32; that stretch reads CPYCSHPDSKVIDSRDVDDGVRRRRECVVC. Positions 47–137 constitute an ATP-cone domain; that stretch reads LFVVKKDQRR…VYREFTDITQ (91 aa).

The protein belongs to the NrdR family. Requires Zn(2+) as cofactor.

Functionally, negatively regulates transcription of bacterial ribonucleotide reductase nrd genes and operons by binding to NrdR-boxes. This Dehalococcoides mccartyi (strain ATCC BAA-2100 / JCM 16839 / KCTC 5957 / BAV1) protein is Transcriptional repressor NrdR.